A 460-amino-acid polypeptide reads, in one-letter code: NADH-ubiquinone oxidoreductase chain 4 (460 aa).

The next 13 helical transmembrane spans lie at 22–42 (WLWPTTLLHSLLIALASLSWL), 61–81 (PLSTPLLILSCWLLPLMILAS), 97–114 (YISLLTSLQFFLILAFSA), 118–140 (IMFYVMFEVTLIPTLILITRWGN), 149–169 (TYFLFYTLAGSLPLLVALLLL), 196–216 (IWWTGCILAFLVKMPLYGVHL), 226–246 (PIAGSMILAAVLLKLGGYGMM), 259–279 (LSYPFIILALWGVIMTGSICM), 286–305 (SLIAYSSVSHMGLVVGGILI), 309–331 (WGFTGALILMIAHGLTSSALFCL), 352–372 (MALPLMTAWWFIASLANLALP), 395–415 (IALTGLGMLITAGYSLYMFLM), and 437–457 (LLIALHLLPLLLLILKPELIW).

Belongs to the complex I subunit 4 family.

It is found in the mitochondrion membrane. The catalysed reaction is a ubiquinone + NADH + 5 H(+)(in) = a ubiquinol + NAD(+) + 4 H(+)(out). In terms of biological role, core subunit of the mitochondrial membrane respiratory chain NADH dehydrogenase (Complex I) that is believed to belong to the minimal assembly required for catalysis. Complex I functions in the transfer of electrons from NADH to the respiratory chain. The immediate electron acceptor for the enzyme is believed to be ubiquinone. This chain is NADH-ubiquinone oxidoreductase chain 4 (MT-ND4), found in Tetraodon nigroviridis (Spotted green pufferfish).